The following is a 388-amino-acid chain: 4-hydroxy-3-methylbut-2-en-1-yl diphosphate synthase (flavodoxin) (388 aa).

The interval 1–22 is disordered; that stretch reads MTSVNLGMPAAPQPVLSPRRKT. Residues cysteine 281, cysteine 284, cysteine 316, and glutamate 323 each coordinate [4Fe-4S] cluster.

This sequence belongs to the IspG family. [4Fe-4S] cluster is required as a cofactor.

The catalysed reaction is (2E)-4-hydroxy-3-methylbut-2-enyl diphosphate + oxidized [flavodoxin] + H2O + 2 H(+) = 2-C-methyl-D-erythritol 2,4-cyclic diphosphate + reduced [flavodoxin]. It participates in isoprenoid biosynthesis; isopentenyl diphosphate biosynthesis via DXP pathway; isopentenyl diphosphate from 1-deoxy-D-xylulose 5-phosphate: step 5/6. Converts 2C-methyl-D-erythritol 2,4-cyclodiphosphate (ME-2,4cPP) into 1-hydroxy-2-methyl-2-(E)-butenyl 4-diphosphate. This chain is 4-hydroxy-3-methylbut-2-en-1-yl diphosphate synthase (flavodoxin), found in Kocuria rhizophila (strain ATCC 9341 / DSM 348 / NBRC 103217 / DC2201).